A 175-amino-acid polypeptide reads, in one-letter code: Adenine phosphoribosyltransferase (175 aa).

This sequence belongs to the purine/pyrimidine phosphoribosyltransferase family. As to quaternary structure, homodimer.

It is found in the cytoplasm. The enzyme catalyses AMP + diphosphate = 5-phospho-alpha-D-ribose 1-diphosphate + adenine. It functions in the pathway purine metabolism; AMP biosynthesis via salvage pathway; AMP from adenine: step 1/1. Functionally, catalyzes a salvage reaction resulting in the formation of AMP, that is energically less costly than de novo synthesis. The polypeptide is Adenine phosphoribosyltransferase (Synechococcus sp. (strain JA-2-3B'a(2-13)) (Cyanobacteria bacterium Yellowstone B-Prime)).